The following is a 123-amino-acid chain: Small ribosomal subunit protein uS12 (123 aa).

Asp-89 is modified (3-methylthioaspartic acid).

It belongs to the universal ribosomal protein uS12 family. Part of the 30S ribosomal subunit. Contacts proteins S8 and S17. May interact with IF1 in the 30S initiation complex.

Its function is as follows. With S4 and S5 plays an important role in translational accuracy. Functionally, interacts with and stabilizes bases of the 16S rRNA that are involved in tRNA selection in the A site and with the mRNA backbone. Located at the interface of the 30S and 50S subunits, it traverses the body of the 30S subunit contacting proteins on the other side and probably holding the rRNA structure together. The combined cluster of proteins S8, S12 and S17 appears to hold together the shoulder and platform of the 30S subunit. The chain is Small ribosomal subunit protein uS12 from Bradyrhizobium diazoefficiens (strain JCM 10833 / BCRC 13528 / IAM 13628 / NBRC 14792 / USDA 110).